The chain runs to 204 residues: N-(5'-phosphoribosyl)anthranilate isomerase (204 aa).

Belongs to the TrpF family.

The catalysed reaction is N-(5-phospho-beta-D-ribosyl)anthranilate = 1-(2-carboxyphenylamino)-1-deoxy-D-ribulose 5-phosphate. The protein operates within amino-acid biosynthesis; L-tryptophan biosynthesis; L-tryptophan from chorismate: step 3/5. The chain is N-(5'-phosphoribosyl)anthranilate isomerase from Bacillus thuringiensis (strain Al Hakam).